Reading from the N-terminus, the 158-residue chain is SsrA-binding protein (158 aa).

Positions 131 to 158 are disordered; it reads KQLHDKRQTEKERDWNKQKQRILQTNQR. A compositionally biased stretch (basic and acidic residues) spans 132–147; the sequence is QLHDKRQTEKERDWNK.

The protein belongs to the SmpB family.

The protein resides in the cytoplasm. Functionally, required for rescue of stalled ribosomes mediated by trans-translation. Binds to transfer-messenger RNA (tmRNA), required for stable association of tmRNA with ribosomes. tmRNA and SmpB together mimic tRNA shape, replacing the anticodon stem-loop with SmpB. tmRNA is encoded by the ssrA gene; the 2 termini fold to resemble tRNA(Ala) and it encodes a 'tag peptide', a short internal open reading frame. During trans-translation Ala-aminoacylated tmRNA acts like a tRNA, entering the A-site of stalled ribosomes, displacing the stalled mRNA. The ribosome then switches to translate the ORF on the tmRNA; the nascent peptide is terminated with the 'tag peptide' encoded by the tmRNA and targeted for degradation. The ribosome is freed to recommence translation, which seems to be the essential function of trans-translation. The polypeptide is SsrA-binding protein (Teredinibacter turnerae (strain ATCC 39867 / T7901)).